The chain runs to 866 residues: MAAFPAYLALLSYLVPGALSHPEAKTLTSRASTEAYSPPYYPAPNGGWISEWASAYEKAHRVVSNMTLAEKVNLTSGTGIYMGPCAGQTGSVPRFGIPNLCLHDSPLGVRNSDHNTAFPAGITVGATFDKDLMYERGVGLGEEARGKGINVLLGPSVGPIGRKPRGGRNWEGFGADPSLQAFGGSLTIKGMQSTGAIASLKHLIGNEQEQHRMSSVITQGYSSNIDDRTLHELYLWPFAESVRAGAGSVMIAYNDVNRSACSQNSKLINGILKDELGFQGFVVTDWLAHIGGVSSALAGLDMSMPGDGAIPLLGTSYWSWELSRSVLNGSVPVERLNDMVTRIVATWYKMGQDKDYPLPNFSSNTEDETGPLYPGALFSPSGIVNQYVNVQGNHNVTARAIARDAITLLKNNENVLPLKRNDTLKIFGTDAGTNSDGINSCTDKGCNKGVLTMGWGSGTSRLPYLITPQEAIANISSNAEFHITDTFPLGVTAGPDDIAIVFINSDSGENYITVDGNPGDRTLAGLHAWHNGDNLVKAAAEKFSNVVVVVHTVGPILMEEWIDLDSVKAVLVAHLPGQEAGWSLTDILFGDYSPSGHLPYTIPHSESDYPESVGLIAQPFGQIQDDYTEGLYIDYRHFLKANITPRYPFGHGLSYTTFNFTEPNLSIIKALDTAYPAARPPKGSTPTYPTAKPDASEVAWPKNFNRIWRYLYPYLDNPEGAAANSSKTYPYPDGYTTEPKPAPRAGGAEGGNPALWDVTFSVQVKVTNTGSRDGRAVAQLYVELPSSLGLDTPSRQLRQFEKTKILAAGESEVLTLDVTRKDLSVWDVVVQDWKAPVNGEGVKIWVGESVADLRVGCVVGEGCSTL.

A signal peptide spans 1-20 (MAAFPAYLALLSYLVPGALS). Residues N65, N73, and N257 are each glycosylated (N-linked (GlcNAc...) asparagine). The active site involves D285. 8 N-linked (GlcNAc...) asparagine glycosylation sites follow: N328, N360, N395, N421, N474, N659, N664, and N724. A disordered region spans residues 725–748 (SSKTYPYPDGYTTEPKPAPRAGGA).

The protein belongs to the glycosyl hydrolase 3 family.

It localises to the secreted. The enzyme catalyses Hydrolysis of terminal, non-reducing beta-D-glucosyl residues with release of beta-D-glucose.. It participates in glycan metabolism; cellulose degradation. Beta-glucosidases are one of a number of cellulolytic enzymes involved in the degradation of cellulosic biomass. Catalyzes the last step releasing glucose from the inhibitory cellobiose. This is Probable beta-glucosidase F (bglF) from Aspergillus oryzae (strain ATCC 42149 / RIB 40) (Yellow koji mold).